Consider the following 644-residue polypeptide: Biosynthetic arginine decarboxylase (644 aa).

Lys100 carries the N6-(pyridoxal phosphate)lysine modification. 282–292 (CDVGGGLAIDY) provides a ligand contact to substrate.

Belongs to the Orn/Lys/Arg decarboxylase class-II family. SpeA subfamily. It depends on Mg(2+) as a cofactor. The cofactor is pyridoxal 5'-phosphate.

The catalysed reaction is L-arginine + H(+) = agmatine + CO2. Its function is as follows. Catalyzes the biosynthesis of agmatine from arginine. The sequence is that of Biosynthetic arginine decarboxylase from Gloeobacter violaceus (strain ATCC 29082 / PCC 7421).